Here is a 333-residue protein sequence, read N- to C-terminus: HTH-type transcriptional repressor PurR (333 aa).

An HTH lacI-type domain is found at 2–56 (ATIKDVAKMAGVSTTTVSHVINKTRFVAKETEQQVLQAIKNLNYSPSAVARSLKV). Positions 4–23 (IKDVAKMAGVSTTTVSHVIN) form a DNA-binding region, H-T-H motif. A DNA-binding region spans residues 48–56 (SAVARSLKV). Residues Tyr73, Lys189, Thr191, Phe220, and Asp274 each coordinate hypoxanthine.

As to quaternary structure, homodimer.

It participates in purine metabolism; purine nucleotide biosynthesis [regulation]. Its function is as follows. Is the main repressor of the genes involved in the de novo synthesis of purine nucleotides, regulating purB, purC, purEK, purF, purHD, purL, purMN and guaBA expression. PurR is allosterically activated to bind its cognate DNA by binding the purine corepressors, hypoxanthine or guanine, thereby effecting transcription repression. In Histophilus somni (strain 129Pt) (Haemophilus somnus), this protein is HTH-type transcriptional repressor PurR.